A 213-amino-acid chain; its full sequence is Imidazole glycerol phosphate synthase subunit HisH 1 (213 aa).

In terms of domain architecture, Glutamine amidotransferase type-1 spans 3–213; that stretch reads SVSIVDYGVG…LSIIQQFLQI (211 aa). The active-site Nucleophile is the Cys-81. Residues His-195 and Glu-197 contribute to the active site.

Heterodimer of HisH and HisF.

The protein resides in the cytoplasm. It catalyses the reaction 5-[(5-phospho-1-deoxy-D-ribulos-1-ylimino)methylamino]-1-(5-phospho-beta-D-ribosyl)imidazole-4-carboxamide + L-glutamine = D-erythro-1-(imidazol-4-yl)glycerol 3-phosphate + 5-amino-1-(5-phospho-beta-D-ribosyl)imidazole-4-carboxamide + L-glutamate + H(+). It carries out the reaction L-glutamine + H2O = L-glutamate + NH4(+). It participates in amino-acid biosynthesis; L-histidine biosynthesis; L-histidine from 5-phospho-alpha-D-ribose 1-diphosphate: step 5/9. Its function is as follows. IGPS catalyzes the conversion of PRFAR and glutamine to IGP, AICAR and glutamate. The HisH subunit provides the glutamine amidotransferase activity that produces the ammonia necessary to HisF for the synthesis of IGP and AICAR. This is Imidazole glycerol phosphate synthase subunit HisH 1 from Legionella pneumophila (strain Paris).